The sequence spans 490 residues: Probable cytochrome P450 518B1 (490 aa).

Residues 2–22 (LTNIIILIILYLFYDFCYKNF) traverse the membrane as a helical segment. A heme-binding site is contributed by Cys-437.

This sequence belongs to the cytochrome P450 family. The cofactor is heme.

It localises to the membrane. This Dictyostelium discoideum (Social amoeba) protein is Probable cytochrome P450 518B1 (cyp518B1).